The sequence spans 329 residues: Malate dehydrogenase (329 aa).

NAD(+) is bound at residue 12 to 18 (GAAGQIG). Residues Arg-93 and Arg-99 each coordinate substrate. NAD(+) is bound by residues Asn-106, Gln-113, and 130–132 (TGN). Positions 132 and 163 each coordinate substrate. The active-site Proton acceptor is the His-188.

This sequence belongs to the LDH/MDH superfamily. MDH type 2 family.

It catalyses the reaction (S)-malate + NAD(+) = oxaloacetate + NADH + H(+). Its function is as follows. Catalyzes the reversible oxidation of malate to oxaloacetate. The polypeptide is Malate dehydrogenase (Mycolicibacterium paratuberculosis (strain ATCC BAA-968 / K-10) (Mycobacterium paratuberculosis)).